The sequence spans 401 residues: Probable N-acetyl-gamma-glutamyl-phosphate reductase, chloroplastic (401 aa).

The transit peptide at 1–48 (MSTASAFSSIQGCWFKGERKIRVADKRAKRLTLGSHVASPSSMSFRVS) directs the protein to the chloroplast. Cys-205 is an active-site residue.

Belongs to the NAGSA dehydrogenase family. Type 1 subfamily. As to quaternary structure, homotetramer.

Its subcellular location is the plastid. It is found in the chloroplast. The catalysed reaction is N-acetyl-L-glutamate 5-semialdehyde + phosphate + NADP(+) = N-acetyl-L-glutamyl 5-phosphate + NADPH + H(+). The protein operates within amino-acid biosynthesis; L-arginine biosynthesis; N(2)-acetyl-L-ornithine from L-glutamate: step 3/4. The protein is Probable N-acetyl-gamma-glutamyl-phosphate reductase, chloroplastic of Arabidopsis thaliana (Mouse-ear cress).